The primary structure comprises 171 residues: ATP synthase subunit b (171 aa).

Residues 4–24 form a helical membrane-spanning segment; the sequence is IAFFVICVGFPSLIFASASIQ.

The protein belongs to the ATPase B chain family. F-type ATPases have 2 components, F(1) - the catalytic core - and F(0) - the membrane proton channel. F(1) has five subunits: alpha(3), beta(3), gamma(1), delta(1), epsilon(1). F(0) has three main subunits: a(1), b(2) and c(10-14). The alpha and beta chains form an alternating ring which encloses part of the gamma chain. F(1) is attached to F(0) by a central stalk formed by the gamma and epsilon chains, while a peripheral stalk is formed by the delta and b chains.

It is found in the cell inner membrane. Its function is as follows. F(1)F(0) ATP synthase produces ATP from ADP in the presence of a proton or sodium gradient. F-type ATPases consist of two structural domains, F(1) containing the extramembraneous catalytic core and F(0) containing the membrane proton channel, linked together by a central stalk and a peripheral stalk. During catalysis, ATP synthesis in the catalytic domain of F(1) is coupled via a rotary mechanism of the central stalk subunits to proton translocation. Functionally, component of the F(0) channel, it forms part of the peripheral stalk, linking F(1) to F(0). In Helicobacter hepaticus (strain ATCC 51449 / 3B1), this protein is ATP synthase subunit b.